A 189-amino-acid polypeptide reads, in one-letter code: Probable nicotinate-nucleotide adenylyltransferase (189 aa).

Belongs to the NadD family.

It carries out the reaction nicotinate beta-D-ribonucleotide + ATP + H(+) = deamido-NAD(+) + diphosphate. It participates in cofactor biosynthesis; NAD(+) biosynthesis; deamido-NAD(+) from nicotinate D-ribonucleotide: step 1/1. Functionally, catalyzes the reversible adenylation of nicotinate mononucleotide (NaMN) to nicotinic acid adenine dinucleotide (NaAD). The sequence is that of Probable nicotinate-nucleotide adenylyltransferase from Bacillus cytotoxicus (strain DSM 22905 / CIP 110041 / 391-98 / NVH 391-98).